A 387-amino-acid chain; its full sequence is Dynactin subunit 2 (387 aa).

Coiled-coil stretches lie at residues 99-125 (LQRC…DTGR), 256-282 (SQLD…SNAT), and 355-387 (TGVQ…QMIK).

The protein belongs to the dynactin subunit 2 family. In terms of assembly, subunit of dynactin, a multiprotein complex associated with dynein.

It localises to the cytoplasm. It is found in the cytoskeleton. The protein localises to the membrane. Modulates cytoplasmic dynein binding to an organelle, and plays a role in prometaphase chromosome alignment and spindle organization during mitosis. This Anopheles gambiae (African malaria mosquito) protein is Dynactin subunit 2.